Consider the following 235-residue polypeptide: 1-Cys peroxiredoxin (235 aa).

Residues Ile5–Leu179 enclose the Thioredoxin domain. Cys49 is an active-site residue. Catalysis depends on Cys49, which acts as the Cysteine sulfenic acid (-SOH) intermediate.

The protein belongs to the peroxiredoxin family. Prx6 subfamily.

The protein localises to the cytoplasm. The catalysed reaction is a hydroperoxide + [protein]-dithiol = [protein]-disulfide + an alcohol + H2O. Functionally, thiol-specific peroxidase that catalyzes the reduction of hydrogen peroxide and organic hydroperoxides to water and alcohols, respectively. Plays a role in cell protection against oxidative stress by detoxifying peroxides. This chain is 1-Cys peroxiredoxin, found in Dirofilaria immitis (Canine heartworm).